A 504-amino-acid polypeptide reads, in one-letter code: ATP synthase subunit alpha (504 aa).

Gly-170–Thr-177 is an ATP binding site.

The protein belongs to the ATPase alpha/beta chains family. In terms of assembly, F-type ATPases have 2 components, CF(1) - the catalytic core - and CF(0) - the membrane proton channel. CF(1) has five subunits: alpha(3), beta(3), gamma(1), delta(1), epsilon(1). CF(0) has four main subunits: a(1), b(1), b'(1) and c(9-12).

The protein resides in the cellular thylakoid membrane. The catalysed reaction is ATP + H2O + 4 H(+)(in) = ADP + phosphate + 5 H(+)(out). Produces ATP from ADP in the presence of a proton gradient across the membrane. The alpha chain is a regulatory subunit. The protein is ATP synthase subunit alpha of Prochlorococcus marinus (strain NATL2A).